A 238-amino-acid chain; its full sequence is Demethylmenaquinone methyltransferase (238 aa).

Residues Thr-60, Asp-81, and Asn-108–Ala-109 each bind S-adenosyl-L-methionine.

This sequence belongs to the class I-like SAM-binding methyltransferase superfamily. MenG/UbiE family.

It carries out the reaction a 2-demethylmenaquinol + S-adenosyl-L-methionine = a menaquinol + S-adenosyl-L-homocysteine + H(+). It participates in quinol/quinone metabolism; menaquinone biosynthesis; menaquinol from 1,4-dihydroxy-2-naphthoate: step 2/2. Functionally, methyltransferase required for the conversion of demethylmenaquinol (DMKH2) to menaquinol (MKH2). The protein is Demethylmenaquinone methyltransferase of Oceanobacillus iheyensis (strain DSM 14371 / CIP 107618 / JCM 11309 / KCTC 3954 / HTE831).